The chain runs to 434 residues: MEHLTLGPLTRATGTVRLPGSKSISNRVLLLAALANGETRVRDLLDSDDTRVMLQALRTLGVAWRQDGPDYIVTGAGGNFPVKSAELFMGNAGTAIRPLTAALALQGGSYKLSGVPRMHERPIGDLVDGLRQVGAVIDYLGNEGFPPLHIQPASLRIDAPIRVRGDVSSQFLTALLMSLPLAQSASGRIEIEVVGELISKPYIEITLNLLARFGIEVERQGWERFILPAGTAYRSPGEIFVEGDASSASYFLAAGAIGGGPVRVEGVGMASIQGDVRFADALNRMGANVMAGDNWIEVRGTERDDGRLHGIELDCNHIPDAAMTLAVAALFAEGTTTLTNIASWRVKETDRIAAMATELRKLGAVVEEGADYLRVTPPQPWQTPADGIGTYDDHRMAMCFSLAAFGPLPVRINDPGCVAKTFPDYFSVFAGVTR.

Residues lysine 22, serine 23, and arginine 27 each contribute to the 3-phosphoshikimate site. Lysine 22 contacts phosphoenolpyruvate. Residues glycine 93 and arginine 121 each contribute to the phosphoenolpyruvate site. 3-phosphoshikimate contacts are provided by serine 168, serine 169, glutamine 170, serine 199, aspartate 320, and lysine 347. Residue glutamine 170 participates in phosphoenolpyruvate binding. The active-site Proton acceptor is aspartate 320. Residues arginine 351, arginine 395, and lysine 420 each contribute to the phosphoenolpyruvate site.

This sequence belongs to the EPSP synthase family. In terms of assembly, monomer.

The protein resides in the cytoplasm. The enzyme catalyses 3-phosphoshikimate + phosphoenolpyruvate = 5-O-(1-carboxyvinyl)-3-phosphoshikimate + phosphate. The protein operates within metabolic intermediate biosynthesis; chorismate biosynthesis; chorismate from D-erythrose 4-phosphate and phosphoenolpyruvate: step 6/7. In terms of biological role, catalyzes the transfer of the enolpyruvyl moiety of phosphoenolpyruvate (PEP) to the 5-hydroxyl of shikimate-3-phosphate (S3P) to produce enolpyruvyl shikimate-3-phosphate and inorganic phosphate. This chain is 3-phosphoshikimate 1-carboxyvinyltransferase, found in Cupriavidus taiwanensis (strain DSM 17343 / BCRC 17206 / CCUG 44338 / CIP 107171 / LMG 19424 / R1) (Ralstonia taiwanensis (strain LMG 19424)).